Consider the following 221-residue polypeptide: Translation initiation factor 6 (221 aa).

This sequence belongs to the eIF-6 family.

Binds to the 50S ribosomal subunit and prevents its association with the 30S ribosomal subunit to form the 70S initiation complex. The chain is Translation initiation factor 6 from Methanosphaerula palustris (strain ATCC BAA-1556 / DSM 19958 / E1-9c).